Reading from the N-terminus, the 372-residue chain is UDP-N-acetylglucosamine--N-acetylmuramyl-(pentapeptide) pyrophosphoryl-undecaprenol N-acetylglucosamine transferase (372 aa).

UDP-N-acetyl-alpha-D-glucosamine is bound by residues 10–12, N124, R166, S196, I256, and Q301; that span reads TGG.

Belongs to the glycosyltransferase 28 family. MurG subfamily.

It is found in the cell membrane. The enzyme catalyses di-trans,octa-cis-undecaprenyl diphospho-N-acetyl-alpha-D-muramoyl-L-alanyl-D-glutamyl-meso-2,6-diaminopimeloyl-D-alanyl-D-alanine + UDP-N-acetyl-alpha-D-glucosamine = di-trans,octa-cis-undecaprenyl diphospho-[N-acetyl-alpha-D-glucosaminyl-(1-&gt;4)]-N-acetyl-alpha-D-muramoyl-L-alanyl-D-glutamyl-meso-2,6-diaminopimeloyl-D-alanyl-D-alanine + UDP + H(+). The protein operates within cell wall biogenesis; peptidoglycan biosynthesis. Functionally, cell wall formation. Catalyzes the transfer of a GlcNAc subunit on undecaprenyl-pyrophosphoryl-MurNAc-pentapeptide (lipid intermediate I) to form undecaprenyl-pyrophosphoryl-MurNAc-(pentapeptide)GlcNAc (lipid intermediate II). This Desulforamulus reducens (strain ATCC BAA-1160 / DSM 100696 / MI-1) (Desulfotomaculum reducens) protein is UDP-N-acetylglucosamine--N-acetylmuramyl-(pentapeptide) pyrophosphoryl-undecaprenol N-acetylglucosamine transferase.